The chain runs to 291 residues: Sulfate transport system permease protein CysW (291 aa).

Over 1-22 (MAEVTQLKRYDARPINWGKWFL) the chain is Cytoplasmic. The helical transmembrane segment at 23-43 (IGIGMLVSAFILLVPMIYIFV) threads the bilayer. The Periplasmic segment spans residues 44 to 69 (QAFSKGLMPVLQNLADPDMLHAIWLT). Residues 66–270 (IWLTVMIALI…MAIITLFLKS (205 aa)) form the ABC transmembrane type-1 domain. The helical transmembrane segment at 70-90 (VMIALIAVPVNLVFGILLAWL) threads the bilayer. Over 91–104 (VTRFNFPGRQLLLT) the chain is Cytoplasmic. A helical transmembrane segment spans residues 105-125 (LLDIPFAVSPVVAGLVYLLFY). Over 126 to 141 (GSNGPLGGWLDEHNLQ) the chain is Periplasmic. A helical transmembrane segment spans residues 142 to 162 (IMFSWPGMVLVTIFVTCPFVV). Over 163 to 200 (RELVPVMLSQGSQEDEAAILLGASGWQMFRRVTLPNIR) the chain is Cytoplasmic. A helical membrane pass occupies residues 201 to 221 (WALLYGVVLTNARAIGEFGAV). At 222–247 (SVVSGSIRGETLSLPLQIELLEQDYN) the chain is on the periplasmic side. Residues 248 to 268 (TVGSFTAAALLTLMAIITLFL) traverse the membrane as a helical segment. The Cytoplasmic segment spans residues 269–291 (KSMLQWRLENQEKRAQQEEHHEH).

Belongs to the binding-protein-dependent transport system permease family. CysTW subfamily. As to quaternary structure, the complex is composed of two ATP-binding proteins (CysA), two transmembrane proteins (CysT and CysW) and a solute-binding protein (CysP).

It is found in the cell inner membrane. Functionally, part of the ABC transporter complex CysAWTP (TC 3.A.1.6.1) involved in sulfate/thiosulfate import. Probably responsible for the translocation of the substrate across the membrane. The sequence is that of Sulfate transport system permease protein CysW (cysW) from Escherichia coli O6:H1 (strain CFT073 / ATCC 700928 / UPEC).